The following is a 337-amino-acid chain: Glyceraldehyde-3-phosphate dehydrogenase (337 aa).

Residues 12–13 (RI), Asp36, Arg80, and Ser122 each bind NAD(+). Residues 153–155 (SCT) and Thr184 contribute to the D-glyceraldehyde 3-phosphate site. Cys154 acts as the Nucleophile in catalysis. Asn185 is an NAD(+) binding site. Residues Arg199, 212–213 (TG), and Arg235 contribute to the D-glyceraldehyde 3-phosphate site. Asn318 is an NAD(+) binding site.

It belongs to the glyceraldehyde-3-phosphate dehydrogenase family. Homotetramer.

The protein resides in the cytoplasm. The catalysed reaction is D-glyceraldehyde 3-phosphate + phosphate + NAD(+) = (2R)-3-phospho-glyceroyl phosphate + NADH + H(+). Its pathway is carbohydrate degradation; glycolysis; pyruvate from D-glyceraldehyde 3-phosphate: step 1/5. Functionally, catalyzes the oxidative phosphorylation of glyceraldehyde 3-phosphate (G3P) to 1,3-bisphosphoglycerate (BPG) using the cofactor NAD. The first reaction step involves the formation of a hemiacetal intermediate between G3P and a cysteine residue, and this hemiacetal intermediate is then oxidized to a thioester, with concomitant reduction of NAD to NADH. The reduced NADH is then exchanged with the second NAD, and the thioester is attacked by a nucleophilic inorganic phosphate to produce BPG. The protein is Glyceraldehyde-3-phosphate dehydrogenase (gap) of Zymomonas mobilis subsp. mobilis (strain ATCC 31821 / ZM4 / CP4).